We begin with the raw amino-acid sequence, 224 residues long: uncharacterized protein (224 aa).

Residues 21–41 (LTVILIIPIVYLGVCGCFEIV) traverse the membrane as a helical segment.

Its subcellular location is the membrane. This is an uncharacterized protein from Methanocaldococcus jannaschii (strain ATCC 43067 / DSM 2661 / JAL-1 / JCM 10045 / NBRC 100440) (Methanococcus jannaschii).